The sequence spans 322 residues: Probable manganese-dependent inorganic pyrophosphatase (322 aa).

His-10, Asp-14, Asp-16, Asp-86, His-108, and Asp-160 together coordinate Mn(2+).

The protein belongs to the PPase class C family. Requires Mn(2+) as cofactor.

The protein resides in the cytoplasm. The catalysed reaction is diphosphate + H2O = 2 phosphate + H(+). This is Probable manganese-dependent inorganic pyrophosphatase (ppaC) from Archaeoglobus fulgidus (strain ATCC 49558 / DSM 4304 / JCM 9628 / NBRC 100126 / VC-16).